The sequence spans 522 residues: Protein nucleotidyltransferase YdiU (522 aa).

ATP-binding residues include Gly-109, Gly-111, Arg-112, Lys-132, Asp-144, Gly-145, Arg-195, and Arg-202. Asp-271 serves as the catalytic Proton acceptor. Residues Asn-272 and Asp-281 each contribute to the Mg(2+) site. Asp-281 lines the ATP pocket.

Belongs to the SELO family. Requires Mg(2+) as cofactor. The cofactor is Mn(2+).

The enzyme catalyses L-seryl-[protein] + ATP = 3-O-(5'-adenylyl)-L-seryl-[protein] + diphosphate. It catalyses the reaction L-threonyl-[protein] + ATP = 3-O-(5'-adenylyl)-L-threonyl-[protein] + diphosphate. The catalysed reaction is L-tyrosyl-[protein] + ATP = O-(5'-adenylyl)-L-tyrosyl-[protein] + diphosphate. It carries out the reaction L-histidyl-[protein] + UTP = N(tele)-(5'-uridylyl)-L-histidyl-[protein] + diphosphate. The enzyme catalyses L-seryl-[protein] + UTP = O-(5'-uridylyl)-L-seryl-[protein] + diphosphate. It catalyses the reaction L-tyrosyl-[protein] + UTP = O-(5'-uridylyl)-L-tyrosyl-[protein] + diphosphate. Functionally, nucleotidyltransferase involved in the post-translational modification of proteins. It can catalyze the addition of adenosine monophosphate (AMP) or uridine monophosphate (UMP) to a protein, resulting in modifications known as AMPylation and UMPylation. This chain is Protein nucleotidyltransferase YdiU, found in Burkholderia ambifaria (strain ATCC BAA-244 / DSM 16087 / CCUG 44356 / LMG 19182 / AMMD) (Burkholderia cepacia (strain AMMD)).